A 361-amino-acid polypeptide reads, in one-letter code: 3,6-anhydro-alpha-L-galactonate cycloisomerase (361 aa).

Lysine 166 (proton acceptor) is an active-site residue. Residues aspartate 195, glutamate 221, and glutamate 247 each coordinate Mg(2+). Histidine 297 (proton donor/acceptor) is an active-site residue.

The protein belongs to the mandelate racemase/muconate lactonizing enzyme family. Requires Mg(2+) as cofactor.

The catalysed reaction is 3,6-anhydro-L-galactonate = 2-dehydro-3-deoxy-L-galactonate. In terms of biological role, involved in the degradation of 3,6-anhydro-L-galactose, which is the major monomeric sugar of red macroalgae. Catalyzes the isomerization of 3,6-anhydrogalactonate (AHGA) to 2-keto-3-deoxy-galactonate (KDGal). The sequence is that of 3,6-anhydro-alpha-L-galactonate cycloisomerase from Streptomyces coelicolor (strain ATCC BAA-471 / A3(2) / M145).